We begin with the raw amino-acid sequence, 988 residues long: Echinoderm microtubule-associated protein-like 4 (988 aa).

The residue at position 1 (methionine 1) is an N-acetylmethionine. The tract at residues methionine 1–aspartate 260 is microtubule-binding. 5 positions are modified to phosphoserine: serine 7, serine 13, serine 16, serine 61, and serine 79. A coiled-coil region spans residues alanine 14–lysine 63. A Phosphothreonine modification is found at threonine 96. Residues threonine 106 to lysine 194 are disordered. A compositionally biased stretch (basic and acidic residues) spans glycine 114 to serine 134. The residue at position 134 (serine 134) is a Phosphoserine; by NEK7. Positions glutamine 137–glutamine 155 are enriched in low complexity. Phosphoserine; by NEK6 is present on serine 144. Residue serine 146 is modified to Phosphoserine; by NEK7. Polar residues predominate over residues isoleucine 156–proline 168. Serine 171 carries the phosphoserine modification. A compositionally biased stretch (basic and acidic residues) spans proline 176–asparagine 193. Phosphoserine is present on serine 200. The residue at position 201 (threonine 201) is a Phosphothreonine. A Phosphotyrosine modification is found at tyrosine 237. Threonine 248 is subject to Phosphothreonine. WD repeat units lie at residues leucine 270–tyrosine 308, threonine 312–serine 359, valine 367–tryptophan 407, alanine 414–tryptophan 449, arginine 456–lysine 495, glutamine 511–histidine 549, glutamate 554–threonine 590, aspartate 593–serine 632, arginine 636–alanine 673, valine 679–valine 715, tyrosine 722–isoleucine 761, arginine 771–tyrosine 829, and alanine 836–leucine 875. Phosphothreonine; by NEK6 and NEK7 is present on threonine 620. The interval isoleucine 887 to cysteine 988 is disordered. Polar residues predominate over residues alanine 890–arginine 904. Phosphoserine is present on residues serine 906, serine 908, and serine 914. Residues methionine 927–glutamate 939 show a composition bias toward polar residues. The segment covering proline 944–serine 953 has biased composition (acidic residues).

The protein belongs to the WD repeat EMAP family. Homotrimer; self-association is mediated by the N-terminal coiled coil. Interacts (via WD repeats) with NUDC. Interacts with alpha- and beta-tubulin during mitosis. Phosphorylated during mitosis. Phosphorylation at Ser-144 and Ser-146 promotes its dissociation from microtubules during mitosis which is required for efficient chromosome congression.

The protein resides in the cytoplasm. The protein localises to the cytoskeleton. Its subcellular location is the spindle. It is found in the microtubule organizing center. It localises to the midbody. Its function is as follows. Essential for the stability of microtubules (MTs). Essential for the formation of MTs. Required for the organization of the mitotic spindle and for the proper attachment of kinetochores to MTs. Promotes the recruitment of NUDC to the mitotic spindle for mitotic progression. The sequence is that of Echinoderm microtubule-associated protein-like 4 (Eml4) from Mus musculus (Mouse).